The primary structure comprises 347 residues: GMP reductase (347 aa).

108-131 (ADFQKTKDIMALTDDLIFICIDIA) is a binding site for NADP(+). Positions 181 and 183 each coordinate K(+). Cysteine 186 acts as the Thioimidate intermediate in catalysis. 216–239 (IIGDGGCSCAGDVSKAFGGGADFV) lines the NADP(+) pocket.

This sequence belongs to the IMPDH/GMPR family. GuaC type 1 subfamily. As to quaternary structure, homotetramer.

It catalyses the reaction IMP + NH4(+) + NADP(+) = GMP + NADPH + 2 H(+). In terms of biological role, catalyzes the irreversible NADPH-dependent deamination of GMP to IMP. It functions in the conversion of nucleobase, nucleoside and nucleotide derivatives of G to A nucleotides, and in maintaining the intracellular balance of A and G nucleotides. The chain is GMP reductase from Aliivibrio fischeri (strain MJ11) (Vibrio fischeri).